The primary structure comprises 692 residues: DNA ligase (692 aa).

Residues 35-39, 88-89, and Glu117 contribute to the NAD(+) site; these read DLVYD and SL. Lys119 serves as the catalytic N6-AMP-lysine intermediate. 4 residues coordinate NAD(+): Arg140, Glu176, Lys301, and Lys325. Residues Cys416, Cys419, Cys434, and Cys439 each contribute to the Zn(2+) site. The BRCT domain maps to 611-692; sequence LTNQSNSWAS…FDLIKNSKKT (82 aa).

The protein belongs to the NAD-dependent DNA ligase family. LigA subfamily. Mg(2+) serves as cofactor. Requires Mn(2+) as cofactor.

It catalyses the reaction NAD(+) + (deoxyribonucleotide)n-3'-hydroxyl + 5'-phospho-(deoxyribonucleotide)m = (deoxyribonucleotide)n+m + AMP + beta-nicotinamide D-nucleotide.. Its function is as follows. DNA ligase that catalyzes the formation of phosphodiester linkages between 5'-phosphoryl and 3'-hydroxyl groups in double-stranded DNA using NAD as a coenzyme and as the energy source for the reaction. It is essential for DNA replication and repair of damaged DNA. This Mesomycoplasma hyopneumoniae (strain J / ATCC 25934 / NCTC 10110) (Mycoplasma hyopneumoniae) protein is DNA ligase.